The primary structure comprises 110 residues: Small ribosomal subunit protein bS18 (110 aa).

Residues 1 to 18 (MSEATTTTTTTSAPRPGG) show a composition bias toward low complexity. Residues 1–41 (MSEATTTTTTTSAPRPGGRPSGPRPDRGPGGPRKKRPFQRR) are disordered. Over residues 32-41 (PRKKRPFQRR) the composition is skewed to basic residues.

Belongs to the bacterial ribosomal protein bS18 family. In terms of assembly, part of the 30S ribosomal subunit. Forms a tight heterodimer with protein bS6.

Binds as a heterodimer with protein bS6 to the central domain of the 16S rRNA, where it helps stabilize the platform of the 30S subunit. This Trichlorobacter lovleyi (strain ATCC BAA-1151 / DSM 17278 / SZ) (Geobacter lovleyi) protein is Small ribosomal subunit protein bS18.